Here is a 697-residue protein sequence, read N- to C-terminus: Elongation factor G (697 aa).

The tr-type G domain maps to 8 to 282 (EDYRNIGIMA…AIVDYLPSPL (275 aa)). GTP is bound by residues 17 to 24 (AHIDAGKT), 81 to 85 (DTPGH), and 135 to 138 (NKMD).

The protein belongs to the TRAFAC class translation factor GTPase superfamily. Classic translation factor GTPase family. EF-G/EF-2 subfamily.

Its subcellular location is the cytoplasm. Functionally, catalyzes the GTP-dependent ribosomal translocation step during translation elongation. During this step, the ribosome changes from the pre-translocational (PRE) to the post-translocational (POST) state as the newly formed A-site-bound peptidyl-tRNA and P-site-bound deacylated tRNA move to the P and E sites, respectively. Catalyzes the coordinated movement of the two tRNA molecules, the mRNA and conformational changes in the ribosome. The protein is Elongation factor G of Metamycoplasma arthritidis (strain 158L3-1) (Mycoplasma arthritidis).